Here is a 114-residue protein sequence, read N- to C-terminus: MAEITSAKATARTVRVSPRKSRLVLDNIRGKSVADAIAILKFTPNKAAGIIEGVLNSAIANAENNFGLEKANLVVSEAFANEGPTLKRFRPRAKGSASPINKRTAHITVVVAEK.

It belongs to the universal ribosomal protein uL22 family. In terms of assembly, part of the 50S ribosomal subunit.

This protein binds specifically to 23S rRNA; its binding is stimulated by other ribosomal proteins, e.g. L4, L17, and L20. It is important during the early stages of 50S assembly. It makes multiple contacts with different domains of the 23S rRNA in the assembled 50S subunit and ribosome. Functionally, the globular domain of the protein is located near the polypeptide exit tunnel on the outside of the subunit, while an extended beta-hairpin is found that lines the wall of the exit tunnel in the center of the 70S ribosome. The protein is Large ribosomal subunit protein uL22 of Streptococcus suis (strain 98HAH33).